The following is a 926-amino-acid chain: Ubiquitin carboxyl-terminal hydrolase 4 (926 aa).

Positions 205–328 constitute a Rhodanese domain; that stretch reads SQMEILLIDI…WLKSNYGRQV (124 aa). S443 is subject to Phosphoserine. The USP domain maps to 562 to 923; sequence VGLENLGNSC…NAYVLFYHRV (362 aa). Catalysis depends on C571, which acts as the Nucleophile. H880 acts as the Proton acceptor in catalysis.

The protein belongs to the peptidase C19 family. In terms of assembly, interacts with BRO1, RFU1 and VPS32. Associates with the 26S proteasome.

Its subcellular location is the cytoplasm. The protein localises to the late endosome membrane. It catalyses the reaction Thiol-dependent hydrolysis of ester, thioester, amide, peptide and isopeptide bonds formed by the C-terminal Gly of ubiquitin (a 76-residue protein attached to proteins as an intracellular targeting signal).. With respect to regulation, RFU1 is an inhibitor of deubiquitination activity. In terms of biological role, ubiquitin thioesterase that acts at the late endosome/prevacuolar compartment to recover ubiquitin from ubiquitinated membrane proteins en route to the vacuole. Also removes ubiquitin from soluble proteins targeted to proteasomes. Is essential to maintain a normal level of free ubiquitin. Involved in the ammonium-induced down-regulation of the GAP1 permease and the UME3 destruction in response to oxidative stress. Has a role in the RAD9 checkpoint response to TOP1 poisons. Required for promoting coordination of DNA replication and avoids DNA overreplication. The protein is Ubiquitin carboxyl-terminal hydrolase 4 (DOA4) of Saccharomyces cerevisiae (strain ATCC 204508 / S288c) (Baker's yeast).